The sequence spans 547 residues: Nitrosoguanidine resistance protein SNG1 (547 aa).

The interval 35–86 (NQRFAEGSGHSSDLAKSLEDYRPPDEKPSSLSSVGEGGANEEEKGGNDGGPL) is disordered. Basic and acidic residues predominate over residues 50–62 (KSLEDYRPPDEKP). Threonine 91 carries the phosphothreonine modification. Helical transmembrane passes span 109–129 (FVLNNFFIACVCVSLISIYWG), 159–179 (ISAIIPSLLASVPGTWHIYNA), 318–338 (ILMAPLQVGLIYCILLTVLQL), 363–383 (LISWATYFLLSIGFCTVSAIF), 394–414 (GGFVVYWMSTWLVMMAVGGAN), 418–438 (LSLVIAYCPPYLSIWLMTWII), 457–477 (YGYIMPIHNAVDIYKVIFLNL), and 488–508 (ILVAWVALNTSLMPFCMKFAG). The segment covering 526–536 (ATQRASRPAEA) has biased composition (low complexity). A disordered region spans residues 526–547 (ATQRASRPAEANTDKNNNPPGN).

The protein to yeast YJR015W.

Its subcellular location is the membrane. May function as a N-methyl-N'nitro-N-nitrosoguanidine (MNNG) export permease. This chain is Nitrosoguanidine resistance protein SNG1 (SNG1), found in Saccharomyces cerevisiae (strain ATCC 204508 / S288c) (Baker's yeast).